We begin with the raw amino-acid sequence, 232 residues long: Cytochrome c oxidase subunit 2 (232 aa).

The Mitochondrial intermembrane segment spans residues 1–30; the sequence is MNNFFQDFNLLFSSSLFSSYMDWFYNFNCS. Residues 31–52 traverse the membrane as a helical segment; sequence LLFGVLSFVSTMFVYLLLSSFY. At 53–69 the chain is on the mitochondrial matrix side; it reads FKSKKIEYQFGELLCSV. A helical membrane pass occupies residues 70–89; that stretch reads FPTLILVMQMVPSLSLLYYY. Over 90-232 the chain is Mitochondrial intermembrane; that stretch reads GLMNLDSSLT…KSWCVGLLSD (143 aa). The Cu cation site is built by His-164, Cys-199, Glu-201, Cys-203, His-207, and Met-210. Residue Glu-201 coordinates Mg(2+).

This sequence belongs to the cytochrome c oxidase subunit 2 family. Component of the cytochrome c oxidase (complex IV, CIV), a multisubunit enzyme composed of a catalytic core of 3 subunits and several supernumerary subunits. The complex exists as a monomer or a dimer and forms supercomplexes (SCs) in the inner mitochondrial membrane with ubiquinol-cytochrome c oxidoreductase (cytochrome b-c1 complex, complex III, CIII). Cu cation serves as cofactor.

It localises to the mitochondrion inner membrane. The enzyme catalyses 4 Fe(II)-[cytochrome c] + O2 + 8 H(+)(in) = 4 Fe(III)-[cytochrome c] + 2 H2O + 4 H(+)(out). Component of the cytochrome c oxidase, the last enzyme in the mitochondrial electron transport chain which drives oxidative phosphorylation. The respiratory chain contains 3 multisubunit complexes succinate dehydrogenase (complex II, CII), ubiquinol-cytochrome c oxidoreductase (cytochrome b-c1 complex, complex III, CIII) and cytochrome c oxidase (complex IV, CIV), that cooperate to transfer electrons derived from NADH and succinate to molecular oxygen, creating an electrochemical gradient over the inner membrane that drives transmembrane transport and the ATP synthase. Cytochrome c oxidase is the component of the respiratory chain that catalyzes the reduction of oxygen to water. Electrons originating from reduced cytochrome c in the intermembrane space (IMS) are transferred via the dinuclear copper A center (CU(A)) of subunit 2 and heme A of subunit 1 to the active site in subunit 1, a binuclear center (BNC) formed by heme A3 and copper B (CU(B)). The BNC reduces molecular oxygen to 2 water molecules using 4 electrons from cytochrome c in the IMS and 4 protons from the mitochondrial matrix. The sequence is that of Cytochrome c oxidase subunit 2 (COII) from Ascaris suum (Pig roundworm).